The chain runs to 115 residues: UPF0125 protein VP0646 (115 aa).

A disordered region spans residues 92–115 (RAEQAKAAGNADPVTGGKPNALRK).

This sequence belongs to the UPF0125 (RnfH) family.

This Vibrio parahaemolyticus serotype O3:K6 (strain RIMD 2210633) protein is UPF0125 protein VP0646.